The chain runs to 187 residues: Adenine phosphoribosyltransferase (187 aa).

Belongs to the purine/pyrimidine phosphoribosyltransferase family. In terms of assembly, homodimer.

Its subcellular location is the cytoplasm. The enzyme catalyses AMP + diphosphate = 5-phospho-alpha-D-ribose 1-diphosphate + adenine. Its pathway is purine metabolism; AMP biosynthesis via salvage pathway; AMP from adenine: step 1/1. Its function is as follows. Catalyzes a salvage reaction resulting in the formation of AMP, that is energically less costly than de novo synthesis. This Burkholderia pseudomallei (strain 1106a) protein is Adenine phosphoribosyltransferase.